Reading from the N-terminus, the 183-residue chain is Intraflagellar transport protein 27 homolog (183 aa).

GTP-binding positions include 12–19 (GAPTVGKT), 63–67 (DVSGQ), and 120–123 (NKSD).

Belongs to the small GTPase superfamily. Rab family. As to quaternary structure, component of the IFT complex B.

Its subcellular location is the cell projection. The protein resides in the cilium. The protein localises to the flagellum. In terms of biological role, small GTPase-like component of the intraflagellar transport (IFT) complex B required for both anterograde and retrograde intraflagellar transport. May be involved in cargo loading of the retrograde transport. This chain is Intraflagellar transport protein 27 homolog, found in Trypanosoma brucei brucei (strain 927/4 GUTat10.1).